We begin with the raw amino-acid sequence, 274 residues long: Glutamate--cysteine ligase regulatory subunit (274 aa).

Lys-263 carries the post-translational modification N6-acetyllysine.

This sequence belongs to the aldo/keto reductase family. Glutamate--cysteine ligase light chain subfamily. Heterodimer of a catalytic heavy chain and a regulatory light chain. In terms of tissue distribution, in all tissues examined. Highest levels in skeletal muscle.

Its pathway is sulfur metabolism; glutathione biosynthesis; glutathione from L-cysteine and L-glutamate: step 1/2. This is Glutamate--cysteine ligase regulatory subunit (GCLM) from Homo sapiens (Human).